A 239-amino-acid polypeptide reads, in one-letter code: Orotidine 5'-phosphate decarboxylase (239 aa).

Substrate-binding positions include Asp-11, Lys-33, 60 to 69 (DLKLHDIPTT), Thr-123, Arg-185, Gln-194, Gly-214, and Arg-215. Lys-62 acts as the Proton donor in catalysis.

It belongs to the OMP decarboxylase family. Type 1 subfamily. In terms of assembly, homodimer.

It carries out the reaction orotidine 5'-phosphate + H(+) = UMP + CO2. It functions in the pathway pyrimidine metabolism; UMP biosynthesis via de novo pathway; UMP from orotate: step 2/2. Catalyzes the decarboxylation of orotidine 5'-monophosphate (OMP) to uridine 5'-monophosphate (UMP). This is Orotidine 5'-phosphate decarboxylase (pyrF) from Bacillus subtilis (strain 168).